The primary structure comprises 384 residues: Helix-loop-helix protein delilah (384 aa).

Disordered regions lie at residues 1 to 101 (MKSN…TANA) and 187 to 227 (EEAE…KIVP). Basic residues predominate over residues 75–86 (KSRKNAPTKSKT). Residues 94–153 (YRRKTANARERTRMREINTAFETLRHCVPEAIKGEDAANTNEKLTKITTLRLAMKYITML) enclose the bHLH domain. Low complexity predominate over residues 209–224 (KKSSAASKRQSQKQAK).

As to quaternary structure, efficient DNA binding requires dimerization with another bHLH protein, possibly with da. As to expression, expressed almost exclusively in the attachments sites of the somatic muscles to tendon cells in the epidermis.

The protein localises to the nucleus. In terms of biological role, probably plays an important role in the differentiation of epidermal cells into the tendon cells that form the attachment sites for all muscles. This chain is Helix-loop-helix protein delilah (tx), found in Drosophila melanogaster (Fruit fly).